We begin with the raw amino-acid sequence, 253 residues long: Type III pantothenate kinase (253 aa).

6–13 provides a ligand contact to ATP; that stretch reads DVGNTNIV. 107 to 110 contacts substrate; the sequence is GADR. Catalysis depends on aspartate 109, which acts as the Proton acceptor. Position 129 (aspartate 129) interacts with K(+). ATP is bound at residue threonine 132. Substrate is bound at residue threonine 184.

It belongs to the type III pantothenate kinase family. As to quaternary structure, homodimer. The cofactor is NH4(+). K(+) serves as cofactor.

The protein localises to the cytoplasm. It catalyses the reaction (R)-pantothenate + ATP = (R)-4'-phosphopantothenate + ADP + H(+). Its pathway is cofactor biosynthesis; coenzyme A biosynthesis; CoA from (R)-pantothenate: step 1/5. Catalyzes the phosphorylation of pantothenate (Pan), the first step in CoA biosynthesis. This Exiguobacterium sibiricum (strain DSM 17290 / CCUG 55495 / CIP 109462 / JCM 13490 / 255-15) protein is Type III pantothenate kinase.